The following is a 204-amino-acid chain: Putative AgrB-like protein (204 aa).

5 helical membrane-spanning segments follow: residues 51 to 73 (VYGI…SYLW), 87 to 107 (LNCT…FQNI), 111 to 131 (NWIV…FAPA), 151 to 168 (AMIG…IPFA), and 173 to 190 (LIMV…PLTY).

Belongs to the AgrB family.

The protein resides in the cell membrane. Functionally, may be involved in the proteolytic processing of a quorum sensing system signal molecule precursor. The sequence is that of Putative AgrB-like protein from Listeria innocua serovar 6a (strain ATCC BAA-680 / CLIP 11262).